The primary structure comprises 87 residues: Phosphoribosyl-ATP pyrophosphatase (87 aa).

This sequence belongs to the PRA-PH family.

The protein resides in the cytoplasm. The catalysed reaction is 1-(5-phospho-beta-D-ribosyl)-ATP + H2O = 1-(5-phospho-beta-D-ribosyl)-5'-AMP + diphosphate + H(+). It functions in the pathway amino-acid biosynthesis; L-histidine biosynthesis; L-histidine from 5-phospho-alpha-D-ribose 1-diphosphate: step 2/9. The chain is Phosphoribosyl-ATP pyrophosphatase from Leifsonia xyli subsp. xyli (strain CTCB07).